The sequence spans 339 residues: Probable thylakoid lumen protein sll0997 (339 aa).

The first 26 residues, 1–26, serve as a signal peptide directing secretion; the sequence is MAPYQSFHIGLLGLALASVWPLSACA.

The protein resides in the cellular thylakoid lumen. This is Probable thylakoid lumen protein sll0997 from Synechocystis sp. (strain ATCC 27184 / PCC 6803 / Kazusa).